The following is a 268-amino-acid chain: Shikimate dehydrogenase (NADP(+)) (268 aa).

Residues 13–15 and Thr60 each bind shikimate; that span reads SLS. Lys64 acts as the Proton acceptor in catalysis. Residue Glu76 participates in NADP(+) binding. Shikimate is bound by residues Asn85 and Asp100. NADP(+) is bound by residues 124–128, 148–153, and Ile209; these read GAGGA and NRTMAR. Tyr211 serves as a coordination point for shikimate. An NADP(+)-binding site is contributed by Gly232.

It belongs to the shikimate dehydrogenase family. As to quaternary structure, homodimer.

The enzyme catalyses shikimate + NADP(+) = 3-dehydroshikimate + NADPH + H(+). The protein operates within metabolic intermediate biosynthesis; chorismate biosynthesis; chorismate from D-erythrose 4-phosphate and phosphoenolpyruvate: step 4/7. Functionally, involved in the biosynthesis of the chorismate, which leads to the biosynthesis of aromatic amino acids. Catalyzes the reversible NADPH linked reduction of 3-dehydroshikimate (DHSA) to yield shikimate (SA). The chain is Shikimate dehydrogenase (NADP(+)) from Staphylococcus aureus (strain bovine RF122 / ET3-1).